The sequence spans 309 residues: MILLPFHTRRLVSHVYCGLKPASQNKGIALEMTRPSSNLANFREAFAKAKHIAVITGAGVSAESGVPTIIGAGGYWRKWQAQHLATPEAFSRNPSRVWEFYHYRREVMLTKNPNPAHLAIAECETRLRKQGRKVVVITQNIDELHHKAGSRNLFEIHGSLFKTRCTSCGSVKENYKSPICSALAGKGAPESDVQDAKIPVEKLPRCEENGCNGLLRPNVVWFGETLDSNLLGEVEKELEMCDLCVVVGTSSVVYPAAMFAPQVAARGVPVAEFNMENTSATTTFKFHFQGPCGTTLPPALARHETELIS.

A mitochondrion-targeting transit peptide spans 1 to 35 (MILLPFHTRRLVSHVYCGLKPASQNKGIALEMTRP). The Deacetylase sirtuin-type domain occupies 36–306 (SSNLANFREA…PPALARHETE (271 aa)). 57–76 (GAGVSAESGVPTIIGAGGYW) is a binding site for NAD(+). 2 residues coordinate substrate: Tyr-101 and Arg-104. 139-142 (QNID) is an NAD(+) binding site. His-157 acts as the Proton acceptor in catalysis. Zn(2+) contacts are provided by Cys-165, Cys-168, Cys-206, and Cys-211. Residues 248-250 (GTS), 274-276 (NME), and Cys-292 each bind NAD(+).

This sequence belongs to the sirtuin family. Class III subfamily. The cofactor is Zn(2+).

Its subcellular location is the mitochondrion. It is found in the cytoplasm. It localises to the cytosol. The protein resides in the nucleus. It catalyses the reaction N(6)-malonyl-L-lysyl-[protein] + NAD(+) + H2O = 2''-O-malonyl-ADP-D-ribose + nicotinamide + L-lysyl-[protein]. The enzyme catalyses N(6)-succinyl-L-lysyl-[protein] + NAD(+) + H2O = 2''-O-succinyl-ADP-D-ribose + nicotinamide + L-lysyl-[protein]. The catalysed reaction is N(6)-glutaryl-L-lysyl-[protein] + NAD(+) + H2O = 2''-O-glutaryl-ADP-D-ribose + nicotinamide + L-lysyl-[protein]. NAD-dependent lysine demalonylase, desuccinylase and deglutarylase that specifically removes malonyl, succinyl and glutaryl groups on target proteins. Has weak NAD-dependent protein deacetylase activity; however this activity may not be physiologically relevant in vivo. This chain is NAD-dependent protein deacylase sirtuin-5B, mitochondrial (sirt5-b), found in Xenopus laevis (African clawed frog).